Here is a 1053-residue protein sequence, read N- to C-terminus: DNA-directed RNA polymerase subunit beta' (1053 aa).

Positions 60, 62, 75, and 78 each coordinate Zn(2+). The Mg(2+) site is built by Asp-449, Asp-451, and Asp-453. The Zn(2+) site is built by Cys-818, Cys-892, Cys-899, and Cys-902.

Belongs to the RNA polymerase beta' chain family. The RNAP catalytic core consists of 2 alpha, 1 beta, 1 beta' and 1 omega subunit. When a sigma factor is associated with the core the holoenzyme is formed, which can initiate transcription. The cofactor is Mg(2+). Zn(2+) is required as a cofactor.

It carries out the reaction RNA(n) + a ribonucleoside 5'-triphosphate = RNA(n+1) + diphosphate. Its function is as follows. DNA-dependent RNA polymerase catalyzes the transcription of DNA into RNA using the four ribonucleoside triphosphates as substrates. This Listeria grayi (Listeria murrayi) protein is DNA-directed RNA polymerase subunit beta'.